A 609-amino-acid chain; its full sequence is Numb-like protein (609 aa).

5 disordered regions span residues 1–68, 223–283, 372–421, 434–464, and 537–609; these read MSRS…QWQA, GSFR…PVAA, ASAG…EEVS, QQQQ…QPFP, and AGAF…EIEL. The segment covering 19-29 has biased composition (pro residues); the sequence is PPAPCGAPGPP. One can recognise a PID domain in the interval 74 to 223; it reads RKGTCSFPVR…ASRTSFAREG (150 aa). Phosphoserine occurs at positions 224 and 228. Over residues 233–245 the composition is skewed to basic and acidic residues; the sequence is PAEREAPDKKKAE. A compositionally biased stretch (low complexity) spans 246 to 259; it reads AAAAPTVAPGPAQP. Serine 263 carries the post-translational modification Phosphoserine. Residue threonine 279 is modified to Phosphothreonine. Residues 409–418 are compositionally biased toward basic and acidic residues; sequence TPSEAERWLE. Serine 411 is subject to Phosphoserine. Residues 434–446 are compositionally biased toward low complexity; sequence QQQQQQQQQQQQQ. 2 stretches are compositionally biased toward pro residues: residues 454–464 and 558–573; these read PTMPPALQPFP and NGAP…PAPE.

In terms of assembly, interacts (via PTB domain) with MAP3K7IP2 (via C-terminal). Interacts (via C-terminal) with TRAF6 (via TRAF domains). Associates with EPS15 and NOTCH1.

It is found in the cytoplasm. Its function is as follows. Plays a role in the process of neurogenesis. Required throughout embryonic neurogenesis to maintain neural progenitor cells, also called radial glial cells (RGCs), by allowing their daughter cells to choose progenitor over neuronal cell fate. Not required for the proliferation of neural progenitor cells before the onset of embryonic neurogenesis. Also required postnatally in the subventricular zone (SVZ) neurogenesis by regulating SVZ neuroblasts survival and ependymal wall integrity. Negative regulator of NF-kappa-B signaling pathway. The inhibition of NF-kappa-B activation is mediated at least in part, by preventing MAP3K7IP2 to interact with polyubiquitin chains of TRAF6 and RIPK1 and by stimulating the 'Lys-48'-linked polyubiquitination and degradation of TRAF6 in cortical neurons. The protein is Numb-like protein (NUMBL) of Homo sapiens (Human).